A 60-amino-acid chain; its full sequence is Ribosome biogenesis protein Nop10 (60 aa).

The tract at residues Ala37–Leu60 is disordered. Residues Lys49–Leu60 are compositionally biased toward basic residues.

This sequence belongs to the NOP10 family.

Its function is as follows. Involved in ribosome biogenesis; more specifically in 18S rRNA pseudouridylation and in cleavage of pre-rRNA. In Halobacterium salinarum (strain ATCC 29341 / DSM 671 / R1), this protein is Ribosome biogenesis protein Nop10.